Reading from the N-terminus, the 677-residue chain is Pentatricopeptide repeat-containing protein At5g39350 (677 aa).

PPR repeat units follow at residues 48 to 78 (SGHI…MPQS), 79 to 113 (SLLS…GVKC), 116 to 146 (DGYT…ILRS), 151 to 181 (DKYV…MKNR), 182 to 216 (DVIS…SVDL), 217 to 251 (DHAT…RLGD), 252 to 282 (KIEV…MERR), 283 to 317 (DVIT…GVRP), 318 to 352 (NAVT…QVYS), 353 to 383 (DIII…ASKY), 384 to 418 (HTGP…DVEP), 419 to 453 (NIAT…GFMS), 454 to 488 (SLDA…HKSK), 489 to 523 (DVVL…GVTP), 524 to 554 (NEIT…MLEH), and 560 to 590 (RSNH…IPFE). The type E motif stretch occupies residues 595-670 (VWGALLAACV…KPGHSTIEIR (76 aa)).

It belongs to the PPR family. PCMP-E subfamily.

This is Pentatricopeptide repeat-containing protein At5g39350 (PCMP-E16) from Arabidopsis thaliana (Mouse-ear cress).